The chain runs to 346 residues: Queuosine 5'-phosphate N-glycosylase/hydrolase (346 aa).

Positions 49, 243, 245, 310, and 315 each coordinate queuine. Catalysis depends on aspartate 245, which acts as the Nucleophile or transition state stabilizer.

Belongs to the QNG1 protein family.

It catalyses the reaction queuosine 5'-phosphate + H2O = queuine + D-ribose 5-phosphate. In terms of biological role, catalyzes the hydrolysis of queuosine 5'-phosphate, releasing the nucleobase queuine (q). Is required for salvage of queuine from exogenous queuosine (Q) that is imported and then converted to queuosine 5'-phosphate intracellularly. This Schizosaccharomyces pombe (strain 972 / ATCC 24843) (Fission yeast) protein is Queuosine 5'-phosphate N-glycosylase/hydrolase.